A 257-amino-acid polypeptide reads, in one-letter code: Acetylglutamate kinase (257 aa).

Residues 43-44 (GG), arginine 65, and asparagine 157 each bind substrate. ATP-binding positions include 180–185 (DVSGIL) and 208–210 (IIT).

It belongs to the acetylglutamate kinase family. ArgB subfamily. Homodimer.

The protein localises to the cytoplasm. The enzyme catalyses N-acetyl-L-glutamate + ATP = N-acetyl-L-glutamyl 5-phosphate + ADP. It participates in amino-acid biosynthesis; L-arginine biosynthesis; N(2)-acetyl-L-ornithine from L-glutamate: step 2/4. Catalyzes the ATP-dependent phosphorylation of N-acetyl-L-glutamate. The chain is Acetylglutamate kinase from Salmonella paratyphi B (strain ATCC BAA-1250 / SPB7).